The following is a 434-amino-acid chain: Methylenetetrahydrofolate--tRNA-(uracil-5-)-methyltransferase TrmFO (434 aa).

10–15 (GAGLAG) serves as a coordination point for FAD.

The protein belongs to the MnmG family. TrmFO subfamily. FAD is required as a cofactor.

The protein resides in the cytoplasm. It catalyses the reaction uridine(54) in tRNA + (6R)-5,10-methylene-5,6,7,8-tetrahydrofolate + NADH + H(+) = 5-methyluridine(54) in tRNA + (6S)-5,6,7,8-tetrahydrofolate + NAD(+). It carries out the reaction uridine(54) in tRNA + (6R)-5,10-methylene-5,6,7,8-tetrahydrofolate + NADPH + H(+) = 5-methyluridine(54) in tRNA + (6S)-5,6,7,8-tetrahydrofolate + NADP(+). Its function is as follows. Catalyzes the folate-dependent formation of 5-methyl-uridine at position 54 (M-5-U54) in all tRNAs. The polypeptide is Methylenetetrahydrofolate--tRNA-(uracil-5-)-methyltransferase TrmFO (Bacillus cereus (strain G9842)).